We begin with the raw amino-acid sequence, 245 residues long: Biosynthetic peptidoglycan transglycosylase (245 aa).

The helical transmembrane segment at 29 to 49 (LLVAFLILSLVLVATVSVINP) threads the bilayer.

It belongs to the glycosyltransferase 51 family.

The protein localises to the cell inner membrane. It catalyses the reaction [GlcNAc-(1-&gt;4)-Mur2Ac(oyl-L-Ala-gamma-D-Glu-L-Lys-D-Ala-D-Ala)](n)-di-trans,octa-cis-undecaprenyl diphosphate + beta-D-GlcNAc-(1-&gt;4)-Mur2Ac(oyl-L-Ala-gamma-D-Glu-L-Lys-D-Ala-D-Ala)-di-trans,octa-cis-undecaprenyl diphosphate = [GlcNAc-(1-&gt;4)-Mur2Ac(oyl-L-Ala-gamma-D-Glu-L-Lys-D-Ala-D-Ala)](n+1)-di-trans,octa-cis-undecaprenyl diphosphate + di-trans,octa-cis-undecaprenyl diphosphate + H(+). The protein operates within cell wall biogenesis; peptidoglycan biosynthesis. Peptidoglycan polymerase that catalyzes glycan chain elongation from lipid-linked precursors. This Shewanella amazonensis (strain ATCC BAA-1098 / SB2B) protein is Biosynthetic peptidoglycan transglycosylase.